Reading from the N-terminus, the 72-residue chain is Translation initiation factor IF-1 (72 aa).

In terms of domain architecture, S1-like spans 1-72; that stretch reads MSKSDIIEMQ…TRGRITWRAK (72 aa).

This sequence belongs to the IF-1 family. Component of the 30S ribosomal translation pre-initiation complex which assembles on the 30S ribosome in the order IF-2 and IF-3, IF-1 and N-formylmethionyl-tRNA(fMet); mRNA recruitment can occur at any time during PIC assembly.

It is found in the cytoplasm. Its function is as follows. One of the essential components for the initiation of protein synthesis. Stabilizes the binding of IF-2 and IF-3 on the 30S subunit to which N-formylmethionyl-tRNA(fMet) subsequently binds. Helps modulate mRNA selection, yielding the 30S pre-initiation complex (PIC). Upon addition of the 50S ribosomal subunit IF-1, IF-2 and IF-3 are released leaving the mature 70S translation initiation complex. The polypeptide is Translation initiation factor IF-1 (Clostridium perfringens (strain 13 / Type A)).